Consider the following 295-residue polypeptide: Nucleotide-binding protein LSL_1171 (295 aa).

13–20 is an ATP binding site; the sequence is GMSGAGKT. 63–66 is a GTP binding site; the sequence is DLRS.

Belongs to the RapZ-like family.

Displays ATPase and GTPase activities. In Ligilactobacillus salivarius (strain UCC118) (Lactobacillus salivarius), this protein is Nucleotide-binding protein LSL_1171.